The chain runs to 585 residues: Nucleus accumbens-associated protein 2 (585 aa).

Residues 30-94 enclose the BTB domain; that stretch reads CDVSIVVKGQ…CYTGKLTMAA (65 aa). Glycyl lysine isopeptide (Lys-Gly) (interchain with G-Cter in SUMO2) cross-links involve residues Lys-171 and Lys-215. Positions 238–261 are enriched in polar residues; it reads PYPQGERTSPGASSLPTTDSSTSY. The segment at 238 to 269 is disordered; the sequence is PYPQGERTSPGASSLPTTDSSTSYHNEDEDDD. Residues Lys-296, Lys-426, and Lys-453 each participate in a glycyl lysine isopeptide (Lys-Gly) (interchain with G-Cter in SUMO2) cross-link. In terms of domain architecture, BEN spans 348 to 445; that stretch reads GSGVYITRGQ…DMCTNARRVR (98 aa). The disordered stretch occupies residues 541-585; sequence APEQLPADGQSSPQAFEQGNTSSSRPQTPVATATRRPEGTYAGTL. Over residues 549-571 the composition is skewed to polar residues; sequence GQSSPQAFEQGNTSSSRPQTPVA.

As to quaternary structure, homooligomer; mediated by the BTB domain. Interacts with the NuRD complex. Interacts (via C-terminal part) with HDAC2. Interacts (via BTB domain) with MTA1, MTA2 and MTA3.

The protein localises to the nucleus. Its function is as follows. Functions as a transcriptional repressor through its association with the NuRD complex. Recruits the NuRD complex to the promoter of MDM2, leading to the repression of MDM2 transcription and subsequent stability of p53/TP53. The sequence is that of Nucleus accumbens-associated protein 2 (Nacc2) from Rattus norvegicus (Rat).